The primary structure comprises 474 residues: Trehalose-6-phosphate synthase (474 aa).

R10 serves as a coordination point for D-glucose 6-phosphate. A UDP-alpha-D-glucose-binding site is contributed by G22–G23. D-glucose 6-phosphate contacts are provided by Y77 and D131. UDP-alpha-D-glucose is bound by residues R263 and K268. R301 contributes to the D-glucose 6-phosphate binding site. UDP-alpha-D-glucose contacts are provided by residues F340 and L366–E370.

Belongs to the glycosyltransferase 20 family. Homotetramer.

It carries out the reaction D-glucose 6-phosphate + UDP-alpha-D-glucose = alpha,alpha-trehalose 6-phosphate + UDP + H(+). Its pathway is glycan biosynthesis; trehalose biosynthesis. In terms of biological role, probably involved in the osmoprotection via the biosynthesis of trehalose. Catalyzes the transfer of glucose from UDP-alpha-D-glucose (UDP-Glc) to D-glucose 6-phosphate (Glc-6-P) to form trehalose-6-phosphate. Acts with retention of the anomeric configuration of the UDP-sugar donor. This chain is Trehalose-6-phosphate synthase, found in Escherichia coli O6:K15:H31 (strain 536 / UPEC).